Consider the following 152-residue polypeptide: Large ribosomal subunit protein bL9 (152 aa).

This sequence belongs to the bacterial ribosomal protein bL9 family.

Its function is as follows. Binds to the 23S rRNA. In Mycobacterium avium (strain 104), this protein is Large ribosomal subunit protein bL9.